Reading from the N-terminus, the 222-residue chain is Sugar fermentation stimulation protein homolog (222 aa).

Belongs to the SfsA family.

This chain is Sugar fermentation stimulation protein homolog, found in Thermotoga sp. (strain RQ2).